Consider the following 85-residue polypeptide: MSSLDKTMHFDFNQNKGKNVYDTLQDVYNALEEKGYNPINQIVGYLLSGDPAYIPRHNDARNLILKHERDEIIEELVKSYLGKNK.

Belongs to the UPF0297 family.

This chain is UPF0297 protein LBA0418, found in Lactobacillus acidophilus (strain ATCC 700396 / NCK56 / N2 / NCFM).